A 649-amino-acid polypeptide reads, in one-letter code: Arylsulfatase (649 aa).

A signal peptide spans 1 to 22; the sequence is MLQRLVVALCLLGFAALTAAAA. Ca(2+)-binding residues include Asp34 and Asp35. N-linked (GlcNAc...) asparagine glycosylation is present at Asn41. Cys72 provides a ligand contact to Ca(2+). The active-site Nucleophile is the Cys72. Cys72 is modified (3-oxoalanine (Cys)). N-linked (GlcNAc...) asparagine glycans are attached at residues Asn89, Asn224, and Asn279. Ca(2+) is bound by residues Asp324 and Asn325. 3 N-linked (GlcNAc...) asparagine glycosylation sites follow: Asn445, Asn489, and Asn531.

This sequence belongs to the sulfatase family. It depends on Ca(2+) as a cofactor. Post-translationally, the conversion to 3-oxoalanine (also known as C-formylglycine, FGly), of a serine or cysteine residue in prokaryotes and of a cysteine residue in eukaryotes, is critical for catalytic activity.

It localises to the periplasm. It carries out the reaction an aryl sulfate + H2O = a phenol + sulfate + H(+). With respect to regulation, inhibited by Na(3)BO(3) and KCN. No inhibition by sodium dodecyl sulfate, even at high concentration. Is commonly produced by soil microorganisms and plays an important role in the mineralization of sulfates. The chain is Arylsulfatase from Volvox carteri (Green alga).